A 225-amino-acid chain; its full sequence is Thymidylate kinase (225 aa).

Gly-10–Thr-17 is a binding site for ATP.

This sequence belongs to the thymidylate kinase family.

It carries out the reaction dTMP + ATP = dTDP + ADP. Phosphorylation of dTMP to form dTDP in both de novo and salvage pathways of dTTP synthesis. The sequence is that of Thymidylate kinase from Trichodesmium erythraeum (strain IMS101).